The following is a 356-amino-acid chain: Carbohydrate sulfotransferase 10 (356 aa).

The Cytoplasmic segment spans residues 1-6 (MHHQWL). A helical; Signal-anchor for type II membrane protein transmembrane segment spans residues 7 to 27 (LLAACFWVIFMFMVASKFITL). Residues 28–356 (TFKDPDVYSA…GYQKPDFLLN (329 aa)) are Lumenal-facing. The N-linked (GlcNAc...) asparagine glycan is linked to Asn99. Residues 127–133 (PKVGNTQ) and 189–197 (RDPFERLIS) each bind 3'-phosphoadenylyl sulfate. 2 N-linked (GlcNAc...) asparagine glycosylation sites follow: Asn228 and Asn316.

It belongs to the sulfotransferase 2 family. In terms of tissue distribution, in fetal tissues, it is predominantly expressed in brain, and weakly expressed in lung, kidney and liver. In adult, it is highly expressed in brain, testis, ovary, expressed at intermediate level in heart, pancreas, skeletal muscle, spleen and thymus, and weakly expressed in other tissues. In brain, it is expressed at higher level in the frontal lobe.

It localises to the golgi apparatus membrane. It catalyses the reaction 3-O-{beta-D-GlcA-(1-&gt;[3)-alpha-D-Xyl-(1-&gt;3)-beta-D-GlcA-(1-&gt;](n)-4)-beta-D-Xyl-(1-&gt;4)-Rib-ol-P-Rib-ol-P-3-beta-D-GalNAc-(1-&gt;3)-beta-D-GlcNAc-(1-&gt;4)-O-6-P-alpha-D-Man}-L-Thr-[protein] + 3'-phosphoadenylyl sulfate = 3-O-{O-3-S-beta-D-GlcA-(1-&gt;[3)-alpha-D-Xyl-(1-&gt;3)-beta-D-GlcA-(1-&gt;](n)-4)-beta-D-Xyl-(1-&gt;4)-Rib-ol-P-Rib-ol-P-3-beta-D-GalNAc-(1-&gt;3)-beta-D-GlcNAc-(1-&gt;4)-O-6-P-alpha-D-Man}-L-Thr-[protein] + adenosine 3',5'-bisphosphate + H(+). It carries out the reaction 17beta-estradiol 3-O-(beta-D-glucuronate) + 3'-phosphoadenylyl sulfate = 17beta-estradiol 3-O-(3-sulfo-beta-D-glucuronate) + adenosine 3',5'-bisphosphate + H(+). The catalysed reaction is 17beta-estradiol 3-O-(beta-D-glucuronate) 17-sulfate + 3'-phosphoadenylyl sulfate = 17beta-estradiol 3-O-(3-sulfo-beta-D-glucuronate) 17-sulfate + adenosine 3',5'-bisphosphate + H(+). The enzyme catalyses 17beta-estradiol 17-O-(beta-D-glucuronate) + 3'-phosphoadenylyl sulfate = 17beta-estradiol 17-O-(3-sulfo-beta-D-glucuronate) + adenosine 3',5'-bisphosphate + H(+). It catalyses the reaction 16alpha,17beta-estriol 3-O-(beta-D-glucuronate) + 3'-phosphoadenylyl sulfate = 16alpha,17beta-estriol 3-O-(3-sulfo-beta-D-glucuronate) + adenosine 3',5'-bisphosphate + H(+). It carries out the reaction 16alpha,17beta-estriol 16-O-(beta-D-glucuronate) + 3'-phosphoadenylyl sulfate = 16alpha,17beta-estriol 16-O-(3-sulfo-beta-D-glucuronate) + adenosine 3',5'-bisphosphate + H(+). The catalysed reaction is 16alpha,17beta-estriol 17-O-(beta-D-glucuronate) + 3'-phosphoadenylyl sulfate = 16alpha,17beta-estriol 17-O-(3-sulfo-beta-D-glucuronate) + adenosine 3',5'-bisphosphate + H(+). The enzyme catalyses estrone 3-O-(beta-D-glucuronate) + 3'-phosphoadenylyl sulfate = estrone 3-O-(3-sulfo-beta-D-glucuronate) + adenosine 3',5'-bisphosphate + H(+). It catalyses the reaction 3alpha,20alpha-dihydroxy-5beta-pregnane 3-O-(beta-D-glucuronate) + 3'-phosphoadenylyl sulfate = 3alpha,20alpha-dihydroxy-5beta-pregnane 3-O-(3-sulfo-beta-D-glucuronate) + adenosine 3',5'-bisphosphate + H(+). It carries out the reaction testosterone 17-O-(beta-D-glucuronate) + 3'-phosphoadenylyl sulfate = testosterone 17-O-(3-sulfo-beta-D-glucuronate) + adenosine 3',5'-bisphosphate + H(+). The catalysed reaction is 3beta-androst-5-en-17-one 3-O-(beta-D-glucuronate) + 3'-phosphoadenylyl sulfate = 3beta-androst-5-en-17-one 3-O-(3-sulfo-beta-D-glucuronate) + adenosine 3',5'-bisphosphate + H(+). The enzyme catalyses 3alpha,17alpha-dihydroxy-5beta-androstane-11-one-17beta-carboxylate 3-O-(beta-D-glucuronate) + 3'-phosphoadenylyl sulfate = 3alpha,17alpha-dihydroxy-5beta-androstane-11-one-17beta-carboxylate 3-O-(3-sulfo-beta-D-glucuronate) + adenosine 3',5'-bisphosphate + H(+). It catalyses the reaction 3alpha-hydroxyetiocholan-17-one 3-O-(beta-D-glucuronate) + 3'-phosphoadenylyl sulfate = 3alpha-hydroxyetiocholan-17-one 3-O-(3-sulfo-beta-D-glucuronate) + adenosine 3',5'-bisphosphate + H(+). It participates in steroid metabolism. Its pathway is protein modification; carbohydrate sulfation. In terms of biological role, catalyzes the transfer of sulfate from 3'-phosphoadenylyl sulfate (PAPS) to position 3 of terminal glucuronic acid of both protein- and lipid-linked oligosaccharides. Participates in biosynthesis of HNK-1 carbohydrate structure 3-O-sulfo-beta-D-GlcA-(1-&gt;3)-beta-D-Gal-(1-&gt;4)-D-GlcNAc-R, a sulfated glucuronyl-lactosaminyl residue carried by many neural recognition molecules, which is involved in cell interactions during ontogenetic development and in synaptic plasticity in the adult. May be indirectly involved in synapse plasticity of the hippocampus, via its role in HNK-1 biosynthesis. Sulfates terminal glucuronyl residue of the laminin globular (LG)-domain binding epitope on DAG1/alpha-dystroglycan and prevents further polymerization by LARGE1 glycosyltransferase. Likely defines the chain length of LG epitope, conferring binding specificity to extracellular matrix components. Plays a role in down-regulating the steroid hormones. Sulfates glucuronidated estrogens and androgens with an impact in hormone cycle and fertility. Has a preference for glucuronyl moiety at the 3-hydroxyl group of a sterol ring rather than the 17-hydroxyl group, showing high catalytic efficiency for 17beta-estradiol 3-O-(beta-D-glucuronate) and dehydroepiandrosterone 3-O-(beta-D-glucuronate) hormones. This chain is Carbohydrate sulfotransferase 10, found in Homo sapiens (Human).